The sequence spans 315 residues: Zinc finger CCCH domain-containing protein 23 (315 aa).

The disordered stretch occupies residues 1–21 (MMIGENKNRPHPTIHIPQWDQ). 2 C3H1-type zinc fingers span residues 131 to 157 (YSGT…HGVF) and 165 to 189 (RYRT…HTTE).

The protein is Zinc finger CCCH domain-containing protein 23 of Arabidopsis thaliana (Mouse-ear cress).